The chain runs to 409 residues: MNDLLDPIRGIPVDLELVRRELDVDLPTARYLVRTGLITTDGARVLRRGPTTGTCATAAAKAAAIRLLEGRTVRTVRVRLPVGTVIGVRISRVGGDPSEARVRKPGSDDHVDVTTGVTIAARVEETGSEGVEIRAGRGVGETPSGKPAISEAVREQIVDNLRYLVDSYGVGLRVTIEVPDGEEIARKTLAHRHGIEGGISILGTKGLVDPNSEEAIEGSIRSDLRYVERVPCLVTGYRTMDRARRLGIPSRDIVNCHGRYDLALEAVKTGVPADGEVKRFDAVLIFGMPGKLLKLAAGAYNTHAKVADARRESLVTRLVEIGRPDLAVEAARHEGLISEFLRSLDPDVRRELFERVCELVEERVSSDHDLECGCALYFRADDSEEVVEGEGWKRLVRGYDDDLIGRPKG.

The protein belongs to the CbiD family.

It catalyses the reaction Co-precorrin-5B + S-adenosyl-L-methionine = Co-precorrin-6A + S-adenosyl-L-homocysteine. Its pathway is cofactor biosynthesis; adenosylcobalamin biosynthesis; cob(II)yrinate a,c-diamide from sirohydrochlorin (anaerobic route): step 6/10. Functionally, catalyzes the methylation of C-1 in cobalt-precorrin-5B to form cobalt-precorrin-6A. This is Cobalt-precorrin-5B C(1)-methyltransferase from Methanopyrus kandleri (strain AV19 / DSM 6324 / JCM 9639 / NBRC 100938).